A 744-amino-acid chain; its full sequence is Dolasta-1(15),8-diene synthase (744 aa).

The terpene cyclase stretch occupies residues 1–344; the sequence is MASTMMNYQD…RRYNPAAPLP (344 aa). Mg(2+) contacts are provided by Asp108 and Asp112. Substrate contacts are provided by residues Asp108, Asp112, 198-201, 246-250, and 336-337; these read RHYD, SWDKE, and RY. The short motif at 108 to 112 is the DDXXD element; that stretch reads DDLTD. The interval 345-744 is prenyltransferase; the sequence is RREDIGKVNG…LHLITFQLKV (400 aa). The disordered stretch occupies residues 399–422; it reads YTTMTPAETSSDDKKKKAKASHET. Basic and acidic residues predominate over residues 409 to 422; sequence SDDKKKKAKASHET. Isopentenyl diphosphate is bound by residues Arg459 and His488. Residues Asp495 and Asp499 each contribute to the Mg(2+) site. Positions 495–499 match the DDXXD motif; sequence DDVQD. Arg504 is a dimethylallyl diphosphate binding site. Arg505 provides a ligand contact to isopentenyl diphosphate. Dimethylallyl diphosphate is bound by residues Lys581, Thr582, and Gln617.

In the N-terminal section; belongs to the terpene synthase family. The protein in the C-terminal section; belongs to the FPP/GGPP synthase family. Hexamer. It depends on Mg(2+) as a cofactor.

It carries out the reaction isopentenyl diphosphate + (2E,6E)-farnesyl diphosphate = (2E,6E,10E)-geranylgeranyl diphosphate + diphosphate. It catalyses the reaction (2E,6E,10E)-geranylgeranyl diphosphate = (5R,12R,14S)-dolasta-1(15),8-diene + diphosphate. The catalysed reaction is (2E,6E,10E)-geranylgeranyl diphosphate = delta-araneosene + diphosphate. Bifunctional terpene synthase involved in the biosynthesis of the diterpenes delta-araneosene and dolasta-1(15),8-diene. The C-terminal prenyltransferase domain of CgDS catalyzes formation of the universal precursor of diterpene, geranylgeranyl diphosphate (GGPP), whereas the N-terminal terpene cyclase domain catalyzes the cyclization of GGPP to the intermediate delta-araneosene that is further converted to dolasta-1(15),8-diene in a second cyclization event. In some cases the cyclization stops at the delta-araneosene stage. The polypeptide is Dolasta-1(15),8-diene synthase (Colletotrichum gloeosporioides (Anthracnose fungus)).